The sequence spans 440 residues: NADH-quinone oxidoreductase subunit D 1 (440 aa).

It belongs to the complex I 49 kDa subunit family. NDH-1 is composed of 14 different subunits. Subunits NuoB, C, D, E, F, and G constitute the peripheral sector of the complex.

Its subcellular location is the cell membrane. The enzyme catalyses a quinone + NADH + 5 H(+)(in) = a quinol + NAD(+) + 4 H(+)(out). In terms of biological role, NDH-1 shuttles electrons from NADH, via FMN and iron-sulfur (Fe-S) centers, to quinones in the respiratory chain. The immediate electron acceptor for the enzyme in this species is believed to be a menaquinone. Couples the redox reaction to proton translocation (for every two electrons transferred, four hydrogen ions are translocated across the cytoplasmic membrane), and thus conserves the redox energy in a proton gradient. The polypeptide is NADH-quinone oxidoreductase subunit D 1 (Streptomyces griseus subsp. griseus (strain JCM 4626 / CBS 651.72 / NBRC 13350 / KCC S-0626 / ISP 5235)).